Reading from the N-terminus, the 162-residue chain is Large ribosomal subunit protein bL9 (162 aa).

It belongs to the bacterial ribosomal protein bL9 family.

Functionally, binds to the 23S rRNA. This chain is Large ribosomal subunit protein bL9, found in Chlorobaculum parvum (strain DSM 263 / NCIMB 8327) (Chlorobium vibrioforme subsp. thiosulfatophilum).